The following is a 403-amino-acid chain: Imidazolonepropionase (403 aa).

Fe(3+) contacts are provided by His-69 and His-71. Residues His-69 and His-71 each contribute to the Zn(2+) site. The 4-imidazolone-5-propanoate site is built by Arg-78, Tyr-141, and His-174. Tyr-141 provides a ligand contact to N-formimidoyl-L-glutamate. Fe(3+) is bound at residue His-239. His-239 provides a ligand contact to Zn(2+). A 4-imidazolone-5-propanoate-binding site is contributed by Gln-242. Asp-314 provides a ligand contact to Fe(3+). Asp-314 contacts Zn(2+). N-formimidoyl-L-glutamate contacts are provided by Asn-316 and Gly-318. Position 319 (Ser-319) interacts with 4-imidazolone-5-propanoate.

The protein belongs to the metallo-dependent hydrolases superfamily. HutI family. The cofactor is Zn(2+). Requires Fe(3+) as cofactor.

It is found in the cytoplasm. It carries out the reaction 4-imidazolone-5-propanoate + H2O = N-formimidoyl-L-glutamate. Its pathway is amino-acid degradation; L-histidine degradation into L-glutamate; N-formimidoyl-L-glutamate from L-histidine: step 3/3. Its function is as follows. Catalyzes the hydrolytic cleavage of the carbon-nitrogen bond in imidazolone-5-propanoate to yield N-formimidoyl-L-glutamate. It is the third step in the universal histidine degradation pathway. The sequence is that of Imidazolonepropionase from Legionella pneumophila (strain Corby).